The sequence spans 171 residues: uncharacterized protein (171 aa).

The protein to A.aeolicus aq_616.

This is an uncharacterized protein from Aquifex aeolicus (strain VF5).